A 583-amino-acid chain; its full sequence is Threonine--tRNA ligase (583 aa).

Residues 185-478 (DHRKLGRELN…LVEHYGGAFP (294 aa)) form a catalytic region. Zn(2+) contacts are provided by Cys278, His329, and His455.

This sequence belongs to the class-II aminoacyl-tRNA synthetase family. As to quaternary structure, homodimer. Zn(2+) is required as a cofactor.

It is found in the cytoplasm. It carries out the reaction tRNA(Thr) + L-threonine + ATP = L-threonyl-tRNA(Thr) + AMP + diphosphate + H(+). Its function is as follows. Catalyzes the attachment of threonine to tRNA(Thr) in a two-step reaction: L-threonine is first activated by ATP to form Thr-AMP and then transferred to the acceptor end of tRNA(Thr). Also edits incorrectly charged L-seryl-tRNA(Thr). This chain is Threonine--tRNA ligase, found in Borrelia duttonii (strain Ly).